Consider the following 255-residue polypeptide: tRNA (guanine-N(1)-)-methyltransferase (255 aa).

Residues Gly-113 and 133 to 138 (IGDYVL) each bind S-adenosyl-L-methionine.

The protein belongs to the RNA methyltransferase TrmD family. Homodimer.

It is found in the cytoplasm. The enzyme catalyses guanosine(37) in tRNA + S-adenosyl-L-methionine = N(1)-methylguanosine(37) in tRNA + S-adenosyl-L-homocysteine + H(+). In terms of biological role, specifically methylates guanosine-37 in various tRNAs. In Salmonella schwarzengrund (strain CVM19633), this protein is tRNA (guanine-N(1)-)-methyltransferase.